The primary structure comprises 457 residues: Argininosuccinate lyase (457 aa).

This sequence belongs to the lyase 1 family. Argininosuccinate lyase subfamily.

It localises to the cytoplasm. It catalyses the reaction 2-(N(omega)-L-arginino)succinate = fumarate + L-arginine. It functions in the pathway amino-acid biosynthesis; L-arginine biosynthesis; L-arginine from L-ornithine and carbamoyl phosphate: step 3/3. This is Argininosuccinate lyase from Psychrobacter cryohalolentis (strain ATCC BAA-1226 / DSM 17306 / VKM B-2378 / K5).